Here is a 633-residue protein sequence, read N- to C-terminus: ABC transporter G family member 1 (633 aa).

Residues L23–T265 form the ABC transporter domain. Position 60-67 (G60–S67) interacts with ATP. An ABC transmembrane type-2 domain is found at T340 to F552. N352 carries N-linked (GlcNAc...) asparagine glycosylation. Helical transmembrane passes span L364 to S384, M394 to V414, L440 to M460, F470 to I490, F498 to F518, and I580 to V600.

Belongs to the ABC transporter superfamily. ABCG family. In terms of assembly, homodimer. As to expression, restricted to the petals, with the highest expression in the limb and, to a lesser extent, in petal tubes, probably in both epidermal and mesophyll cell layers.

It is found in the cell membrane. Functionally, ABC transporter controlling the release of volatile organic compounds (VOCs), including floral volatile benzenoids and phenylpropanoids (FVBP), in flowers of fragrant cultivars (e.g. cv. Mitchell and cv. V26). This scent, mostly produced in the evening and night by the petals, attracts the pollinators (e.g. the night-active hawkmoth pollinator Manduca sexta). This chain is ABC transporter G family member 1, found in Petunia hybrida (Petunia).